The primary structure comprises 813 residues: Immunoglobulin superfamily DCC subclass member 3 (813 aa).

The disordered stretch occupies residues 1 to 21; it reads MAEPRTASPRRLPALRRPGFL. The signal sequence occupies residues 1-47; that stretch reads MAEPRTASPRRLPALRRPGFLPPLLPPPPPPLLLLLLLLPLPAPSLG. A compositionally biased stretch (low complexity) spans 9 to 19; the sequence is PRRLPALRRPG. Ig-like C2-type domains lie at 49–151, 151–232, 250–333, and 341–428; these read GHSA…ATMS, SDFH…VRVS, PTIL…RTAQ, and PAEF…ARLT. 2 cysteine pairs are disulfide-bonded: C75/C129 and C172/C221. N105 carries an N-linked (GlcNAc...) asparagine glycan. A glycan (N-linked (GlcNAc...) asparagine) is linked at N258. 2 cysteine pairs are disulfide-bonded: C271-C319 and C363-C412. 2 N-linked (GlcNAc...) asparagine glycosylation sites follow: N393 and N394. Fibronectin type-III domains lie at 438-532 and 535-630; these read PPRN…TLGE and VPPP…ASER. N-linked (GlcNAc...) asparagine glycans are attached at residues N592, N616, and N646. A helical membrane pass occupies residues 653 to 673; sequence IVIGIHIGVTCIIFCVLFLLF. Disordered stretches follow at residues 689 to 724 and 775 to 813; these read LSPP…EKPV and TTEA…AAPQ.

This sequence belongs to the immunoglobulin superfamily. DCC family. In terms of tissue distribution, detected in cerebellum, kidney, heart, lung, skeletal muscle and spleen.

It is found in the membrane. This Mus musculus (Mouse) protein is Immunoglobulin superfamily DCC subclass member 3 (Igdcc3).